The primary structure comprises 505 residues: Tyrosine-protein kinase Blk (505 aa).

A disordered region spans residues 1-37 (MGLVSSKKPDKEKPIKEKDKGQWSPLKVSAQDKDAPP). Glycine 2 carries the N-myristoyl glycine lipid modification. The span at 7–21 (KKPDKEKPIKEKDKG) shows a compositional bias: basic and acidic residues. In terms of domain architecture, SH3 spans 58–118 (EDKHFVVALY…PSNFVARVES (61 aa)). One can recognise an SH2 domain in the interval 124-220 (WFFRSQGRKE…GLCQRLTLPC (97 aa)). The Protein kinase domain occupies 241–494 (LRLVRKLGSG…FLQSVLEDFY (254 aa)). Residues 247–255 (LGSGQFGEV) and lysine 269 each bind ATP. Catalysis depends on aspartate 360, which acts as the Proton acceptor. Tyrosine 389 is modified (phosphotyrosine; by autocatalysis).

The protein belongs to the protein kinase superfamily. Tyr protein kinase family. SRC subfamily. In terms of assembly, interacts with CBL (via SH2 domain). Interacts with CD79A and CD79B (via SH2 domain). In terms of processing, phosphorylated on tyrosine residues after antibody-mediated surface engagement of the B-cell antigen receptor (BCR). Post-translationally, ubiquitination of activated BLK by the UBE3A ubiquitin protein ligase leads to its degradation by the ubiquitin-proteasome pathway. As to expression, expressed in lymphatic organs, pancreatic islets, Leydig cells, striate ducts of salivary glands and hair follicles.

It localises to the cell membrane. The enzyme catalyses L-tyrosyl-[protein] + ATP = O-phospho-L-tyrosyl-[protein] + ADP + H(+). With respect to regulation, antibody-mediated surface engagement of the B-cell antigen receptor (BCR) which results in the phosphorylation of BLK on tyrosine residues, stimulates the enzymatic activity. In terms of biological role, non-receptor tyrosine kinase involved in B-lymphocyte development, differentiation and signaling. B-cell receptor (BCR) signaling requires a tight regulation of several protein tyrosine kinases and phosphatases, and associated coreceptors. Binding of antigen to the B-cell antigen receptor (BCR) triggers signaling that ultimately leads to B-cell activation. Signaling through BLK plays an important role in transmitting signals through surface immunoglobulins and supports the pro-B to pre-B transition, as well as the signaling for growth arrest and apoptosis downstream of B-cell receptor. Specifically binds and phosphorylates CD79A at 'Tyr-188'and 'Tyr-199', as well as CD79B at 'Tyr-196' and 'Tyr-207'. Also phosphorylates the immunoglobulin G receptors FCGR2A, FCGR2B and FCGR2C. With FYN and LYN, plays an essential role in pre-B-cell receptor (pre-BCR)-mediated NF-kappa-B activation. Also contributes to BTK activation by indirectly stimulating BTK intramolecular autophosphorylation. In pancreatic islets, acts as a modulator of beta-cells function through the up-regulation of PDX1 and NKX6-1 and consequent stimulation of insulin secretion in response to glucose. Phosphorylates CGAS, promoting retention of CGAS in the cytosol. The polypeptide is Tyrosine-protein kinase Blk (BLK) (Homo sapiens (Human)).